Here is a 241-residue protein sequence, read N- to C-terminus: Caffeoyl-CoA O-methyltransferase (241 aa).

Lys-14 is a binding site for substrate. S-adenosyl-L-methionine-binding positions include Thr-58, Glu-80, 82–83 (GV), Ser-88, Asp-106, and Ala-135. Residue Asp-158 participates in substrate binding. An a divalent metal cation-binding site is contributed by Asp-158. Asp-160 provides a ligand contact to S-adenosyl-L-methionine. The a divalent metal cation site is built by Asp-184 and Asn-185.

It belongs to the class I-like SAM-binding methyltransferase superfamily. Cation-dependent O-methyltransferase family. CCoAMT subfamily. Requires a divalent metal cation as cofactor.

The enzyme catalyses (E)-caffeoyl-CoA + S-adenosyl-L-methionine = (E)-feruloyl-CoA + S-adenosyl-L-homocysteine + H(+). It functions in the pathway aromatic compound metabolism; phenylpropanoid biosynthesis. Its function is as follows. Methylates caffeoyl-CoA to feruloyl-CoA and 5-hydroxyferuloyl-CoA to sinapoyl-CoA. Plays a role in the synthesis of feruloylated polysaccharides. Involved in the reinforcement of the plant cell wall. Also involved in the responding to wounding or pathogen challenge by the increased formation of cell wall-bound ferulic acid polymers. The chain is Caffeoyl-CoA O-methyltransferase from Stellaria longipes (Longstalk starwort).